The sequence spans 171 residues: Shikimate kinase (171 aa).

14-19 is a binding site for ATP; that stretch reads GAGKST. Residue Ser-18 coordinates Mg(2+). Residues Asp-36, Arg-60, and Gly-82 each coordinate substrate. Arg-120 provides a ligand contact to ATP. Arg-139 provides a ligand contact to substrate. Position 156 (Gln-156) interacts with ATP.

It belongs to the shikimate kinase family. As to quaternary structure, monomer. The cofactor is Mg(2+).

The protein resides in the cytoplasm. The catalysed reaction is shikimate + ATP = 3-phosphoshikimate + ADP + H(+). It functions in the pathway metabolic intermediate biosynthesis; chorismate biosynthesis; chorismate from D-erythrose 4-phosphate and phosphoenolpyruvate: step 5/7. Functionally, catalyzes the specific phosphorylation of the 3-hydroxyl group of shikimic acid using ATP as a cosubstrate. In Pseudoalteromonas atlantica (strain T6c / ATCC BAA-1087), this protein is Shikimate kinase.